A 245-amino-acid chain; its full sequence is Uridylate kinase (245 aa).

An ATP-binding site is contributed by 13-16; the sequence is KLSG. Gly56 is a UMP binding site. 2 residues coordinate ATP: Gly57 and Arg61. UMP-binding positions include Asp76 and 138 to 145; that span reads TGRPFFTT. 3 residues coordinate ATP: Asn166, Tyr172, and Asp175.

It belongs to the UMP kinase family. Homohexamer.

It is found in the cytoplasm. The catalysed reaction is UMP + ATP = UDP + ADP. The protein operates within pyrimidine metabolism; CTP biosynthesis via de novo pathway; UDP from UMP (UMPK route): step 1/1. Inhibited by UTP. Functionally, catalyzes the reversible phosphorylation of UMP to UDP. This chain is Uridylate kinase, found in Mycoplasma mobile (strain ATCC 43663 / 163K / NCTC 11711) (Mesomycoplasma mobile).